Consider the following 150-residue polypeptide: Urease subunit beta (150 aa).

Positions 122–140 (GAVVGDSPAATPGTTGATG) are enriched in low complexity. Residues 122–150 (GAVVGDSPAATPGTTGATGDLPGYLGEGS) form a disordered region.

The protein belongs to the urease beta subunit family. As to quaternary structure, heterotrimer of UreA (gamma), UreB (beta) and UreC (alpha) subunits. Three heterotrimers associate to form the active enzyme.

It localises to the cytoplasm. It catalyses the reaction urea + 2 H2O + H(+) = hydrogencarbonate + 2 NH4(+). Its pathway is nitrogen metabolism; urea degradation; CO(2) and NH(3) from urea (urease route): step 1/1. The polypeptide is Urease subunit beta (Frankia alni (strain DSM 45986 / CECT 9034 / ACN14a)).